A 358-amino-acid polypeptide reads, in one-letter code: Phospho-N-acetylmuramoyl-pentapeptide-transferase (358 aa).

The next 10 membrane-spanning stretches (helical) occupy residues 19–39 (YLTL…VLIG), 71–91 (TMGG…WADL), 95–115 (YVWV…IDDY), 126–146 (LIAR…ALYL), 166–186 (VMPQ…VGTS), 194–214 (GLDG…AIFA), 237–257 (LVIV…FNTY), 261–281 (VFMG…IAVL), 286–306 (IVLV…ILQV), and 336–356 (VIVR…ATLK).

The protein belongs to the glycosyltransferase 4 family. MraY subfamily. The cofactor is Mg(2+).

It is found in the cell inner membrane. The catalysed reaction is UDP-N-acetyl-alpha-D-muramoyl-L-alanyl-gamma-D-glutamyl-meso-2,6-diaminopimeloyl-D-alanyl-D-alanine + di-trans,octa-cis-undecaprenyl phosphate = di-trans,octa-cis-undecaprenyl diphospho-N-acetyl-alpha-D-muramoyl-L-alanyl-D-glutamyl-meso-2,6-diaminopimeloyl-D-alanyl-D-alanine + UMP. It participates in cell wall biogenesis; peptidoglycan biosynthesis. Functionally, catalyzes the initial step of the lipid cycle reactions in the biosynthesis of the cell wall peptidoglycan: transfers peptidoglycan precursor phospho-MurNAc-pentapeptide from UDP-MurNAc-pentapeptide onto the lipid carrier undecaprenyl phosphate, yielding undecaprenyl-pyrophosphoryl-MurNAc-pentapeptide, known as lipid I. This Pseudoalteromonas atlantica (strain T6c / ATCC BAA-1087) protein is Phospho-N-acetylmuramoyl-pentapeptide-transferase.